The chain runs to 748 residues: MTLTTEKQVKVVVDRDVVPTSFEKWAKPGHFSRSLAKGPKTTTWIWNLHADAHDFDSHTSSLEEVSRKIFSAHFGQLAIIFIWLSGMYFHGARFSNYVAWLSNPTGIKPSAQVVWPIVGQQILNADVGGGMQGIQITSGLFQLWRASGIVNELQLYVTALGGLGMAGLMIFAGWFHYHKAAPKLEWFQNVESMLNHHLAGLLGLGSLSWAGHQIHVSLPINKLLDAGVAPSSIPLPHEFILNRNLMAELYPSFQQGLVPFFTLNWKQYSDILTFKGGLSPVTGGLWLTDVAHHHLAIAVLFLVAGHMYRTNWGIGHSIKQILEAHKGPLTGEGHKGLYEILTTSWHANLAINLAMLGSLSIIVAHHMYAMPPYPYLATDYPTQLSLFTHHMWIGGFCIVGAGAHAAIYMVRDYSPTVNFNNVLDRMIRHRDAIISHLNWVCIFLGMHSFGLYIHNDTMRALGRAQDMFSDTAIQLQPVFAQWIQQIHTLAPGNTAVNALATASYAFGADTVTVGSKIAMMPIKLGTADFMVHHIHAFTIHVTTLILLKGVLYARNSRLIPDKANLGFRFPCDGPGRGGTCQVSAWDHVFLGLFWMYNALSIVIFHFSWKMQSDVWGTVTSNGAISHITGGNFAQSAITINGWLRDFLWAQASQVIQSYGSSLSAYGLMFLGAHFVWAFSLMFLFSGRGYWQELIESIVWAHNKLKVAPAIAPRALSITQGRAVGVAHYLLGGIATTWAFFLARIIAVG.

8 helical membrane-spanning segments follow: residues 69-92 (IFSA…FHGA), 155-178 (LYVT…FHYH), 194-218 (LNHH…HVSL), 290-308 (VAHH…GHMY), 345-368 (WHAN…HHMY), 384-410 (LSLF…IYMV), 432-454 (AIIS…LYIH), and 529-547 (FMVH…LILL). 2 residues coordinate [4Fe-4S] cluster: cysteine 571 and cysteine 580. A run of 2 helical transmembrane segments spans residues 587–608 (HVFL…HFSW) and 662–684 (LSAY…MFLF). Residue histidine 673 participates in chlorophyll a' binding. Chlorophyll a is bound by residues methionine 681 and tyrosine 689. Tryptophan 690 lines the phylloquinone pocket. A helical membrane pass occupies residues 722–742 (AVGVAHYLLGGIATTWAFFLA).

It belongs to the PsaA/PsaB family. In terms of assembly, the PsaA/B heterodimer binds the P700 chlorophyll special pair and subsequent electron acceptors. PSI consists of a core antenna complex that captures photons, and an electron transfer chain that converts photonic excitation into a charge separation. The eukaryotic PSI reaction center is composed of at least 11 subunits. P700 is a chlorophyll a/chlorophyll a' dimer, A0 is one or more chlorophyll a, A1 is one or both phylloquinones and FX is a shared 4Fe-4S iron-sulfur center. serves as cofactor.

The protein resides in the plastid. The protein localises to the chloroplast thylakoid membrane. It catalyses the reaction reduced [plastocyanin] + hnu + oxidized [2Fe-2S]-[ferredoxin] = oxidized [plastocyanin] + reduced [2Fe-2S]-[ferredoxin]. Its function is as follows. PsaA and PsaB bind P700, the primary electron donor of photosystem I (PSI), as well as the electron acceptors A0, A1 and FX. PSI is a plastocyanin/cytochrome c6-ferredoxin oxidoreductase, converting photonic excitation into a charge separation, which transfers an electron from the donor P700 chlorophyll pair to the spectroscopically characterized acceptors A0, A1, FX, FA and FB in turn. Oxidized P700 is reduced on the lumenal side of the thylakoid membrane by plastocyanin or cytochrome c6. The polypeptide is Photosystem I P700 chlorophyll a apoprotein A1 (Cyanidioschyzon merolae (strain NIES-3377 / 10D) (Unicellular red alga)).